The chain runs to 85 residues: Insect toxin 2-53 (85 aa).

Positions 1 to 21 (MKLLLLLIVSASMLIESLVNA) are cleaved as a signal peptide. Residues 22-82 (DGYIKRRDGC…TWKSETNTCG (61 aa)) enclose the LCN-type CS-alpha/beta domain. Disulfide bonds link C31–C81, C35–C56, C42–C63, and C46–C65. Position 82 is a glycine amide (G82).

It belongs to the long (4 C-C) scorpion toxin superfamily. Sodium channel inhibitor family. Beta subfamily. Expressed by the venom gland.

The protein resides in the secreted. Functionally, depressant insect toxins cause a transient contraction paralysis followed by a slow flaccid paralysis. They bind voltage-independently to sodium channels (Nav) and block action potentials, primarily by depolarizing the axonal membrane and suppressing the sodium current. In Leiurus hebraeus (Hebrew deathstalker scorpion), this protein is Insect toxin 2-53.